A 609-amino-acid chain; its full sequence is Phosphoenolpyruvate carboxykinase [GTP] (609 aa).

Substrate contacts are provided by residues arginine 81 and 220–222; that span reads YGG. Mn(2+)-binding residues include lysine 229 and histidine 249. Serine 271 serves as a coordination point for substrate. Residue 272-277 participates in GTP binding; sequence ACGKTN. Cysteine 273 is an active-site residue. Aspartate 296 is a Mn(2+) binding site. 387–389 contributes to the substrate binding site; the sequence is NSR. GTP is bound by residues arginine 389, arginine 420, and 515–518; that span reads FGEN.

It belongs to the phosphoenolpyruvate carboxykinase [GTP] family. As to quaternary structure, monomer. Requires Mn(2+) as cofactor.

The protein localises to the cytoplasm. The catalysed reaction is oxaloacetate + GTP = phosphoenolpyruvate + GDP + CO2. It participates in carbohydrate biosynthesis; gluconeogenesis. In terms of biological role, catalyzes the conversion of oxaloacetate (OAA) to phosphoenolpyruvate (PEP), the rate-limiting step in the metabolic pathway that produces glucose from lactate and other precursors derived from the citric acid cycle. The sequence is that of Phosphoenolpyruvate carboxykinase [GTP] from Mycobacterium ulcerans (strain Agy99).